Consider the following 349-residue polypeptide: GTPase Obg (349 aa).

Positions 1 to 159 (MKFLDEAKVY…RWIWLRLKLI (159 aa)) constitute an Obg domain. One can recognise an OBG-type G domain in the interval 160 to 327 (ADAGLVGLPN…ALRALVEVIG (168 aa)). GTP contacts are provided by residues 166-173 (GLPNAGKS), 191-195 (FTTLH), 212-215 (DIPG), 279-282 (NKID), and 308-310 (SGV). Residues serine 173 and threonine 193 each coordinate Mg(2+).

It belongs to the TRAFAC class OBG-HflX-like GTPase superfamily. OBG GTPase family. Monomer. Requires Mg(2+) as cofactor.

Its subcellular location is the cytoplasm. In terms of biological role, an essential GTPase which binds GTP, GDP and possibly (p)ppGpp with moderate affinity, with high nucleotide exchange rates and a fairly low GTP hydrolysis rate. Plays a role in control of the cell cycle, stress response, ribosome biogenesis and in those bacteria that undergo differentiation, in morphogenesis control. The chain is GTPase Obg from Rhodopseudomonas palustris (strain BisB18).